Here is a 635-residue protein sequence, read N- to C-terminus: Interferon-induced GTP-binding protein Mx2 (635 aa).

One can recognise a Dynamin-type G domain in the interval 31 to 304 (DLALPAIAVI…LVQHIEKSMP (274 aa)). Residues 41-48 (GDQSSGKS) form a G1 motif region. Residue 41–48 (GDQSSGKS) participates in GTP binding. Residues 66 to 68 (VTR) form a G2 motif region. The segment at 142–145 (DLPG) is G3 motif. Residues 142–146 (DLPGI) and 211–214 (TKPD) each bind GTP. Positions 211 to 214 (TKPD) are G4 motif. A G5 motif region spans residues 243-246 (KCRG). One can recognise a GED domain in the interval 549 to 635 (LREMMLHLKS…MKAHNYLVEF (87 aa)).

This sequence belongs to the TRAFAC class dynamin-like GTPase superfamily. Dynamin/Fzo/YdjA family.

It is found in the nucleus. The protein resides in the cytoplasm. Functionally, does not inhibit strain RB-1 of the fish pathogen, infectious hematopoietic necrosis virus (IHNV). The polypeptide is Interferon-induced GTP-binding protein Mx2 (Oncorhynchus mykiss (Rainbow trout)).